Reading from the N-terminus, the 152-residue chain is Small ribosomal subunit protein uS15 (152 aa).

This sequence belongs to the universal ribosomal protein uS15 family. Part of the 30S ribosomal subunit.

This chain is Small ribosomal subunit protein uS15, found in Saccharolobus solfataricus (strain ATCC 35092 / DSM 1617 / JCM 11322 / P2) (Sulfolobus solfataricus).